The sequence spans 344 residues: Arginine N-succinyltransferase (344 aa).

Leu125 is a succinyl-CoA binding site. The active-site Proton donor is His229.

The protein belongs to the arginine N-succinyltransferase family.

It carries out the reaction succinyl-CoA + L-arginine = N(2)-succinyl-L-arginine + CoA + H(+). It participates in amino-acid degradation; L-arginine degradation via AST pathway; L-glutamate and succinate from L-arginine: step 1/5. Functionally, catalyzes the transfer of succinyl-CoA to arginine to produce N(2)-succinylarginine. The chain is Arginine N-succinyltransferase from Escherichia coli O127:H6 (strain E2348/69 / EPEC).